The primary structure comprises 546 residues: Glutathione synthetase, chloroplastic (546 aa).

Residues 1–63 (MGSGCSSPSI…SPLKCAKVPE (63 aa)) constitute a chloroplast transit peptide. R200 contributes to the substrate binding site. E216 serves as a coordination point for ATP. E216 and N218 together coordinate Mg(2+). Residues 220–223 (ISSS), 288–290 (ERN), Q294, and 342–345 (RAGY) contribute to the substrate site. ATP is bound by residues K381, 435–444 (KPQREGGGNN), Y446, 471–474 (MQRI), and E497. Residue E439 participates in Mg(2+) binding. R522 provides a ligand contact to substrate. Residues K524 and E530 each contribute to the ATP site. 533-534 (VA) is a substrate binding site.

It belongs to the eukaryotic GSH synthase family. In terms of assembly, homodimer. Mg(2+) serves as cofactor.

The protein resides in the plastid. Its subcellular location is the chloroplast. It carries out the reaction gamma-L-glutamyl-L-cysteine + glycine + ATP = glutathione + ADP + phosphate + H(+). It functions in the pathway sulfur metabolism; glutathione biosynthesis; glutathione from L-cysteine and L-glutamate: step 2/2. The protein is Glutathione synthetase, chloroplastic (GSH2) of Solanum lycopersicum (Tomato).